A 135-amino-acid chain; its full sequence is UPF0299 membrane protein Spro_1570 (135 aa).

Transmembrane regions (helical) follow at residues 4–24, 30–50, 63–83, and 93–113; these read LFTL…CLFA, ALLP…FALL, GCHL…VGVM, and LGPL…VVGY.

The protein belongs to the UPF0299 family.

It is found in the cell inner membrane. This Serratia proteamaculans (strain 568) protein is UPF0299 membrane protein Spro_1570.